A 262-amino-acid chain; its full sequence is uncharacterized protein (262 aa).

Residues 6–70 form the S4 RNA-binding domain; sequence LRINQFLAHY…LKNKKFSVLV (65 aa). Asp-108 functions as the Nucleophile in the catalytic mechanism.

Belongs to the pseudouridine synthase RsuA family.

It carries out the reaction a uridine in RNA = a pseudouridine in RNA. This is an uncharacterized protein from Helicobacter pylori (strain ATCC 700392 / 26695) (Campylobacter pylori).